The primary structure comprises 243 residues: Large ribosomal subunit protein uL2 (243 aa).

Basic residues predominate over residues 1 to 12 (MGRRIQGQRRGR). Disordered stretches follow at residues 1-38 (MGRRIQGQRRGRGTSTFRAPSHRYKAELSHKQSESDDT) and 198-243 (VDHP…GSSE). 2 stretches are compositionally biased toward basic and acidic residues: residues 24 to 34 (YKAELSHKQSE) and 221 to 231 (PPGRKVGDIAS).

The protein belongs to the universal ribosomal protein uL2 family. As to quaternary structure, part of the 50S ribosomal subunit. Forms a bridge to the 30S subunit in the 70S ribosome.

Its function is as follows. One of the primary rRNA binding proteins. Required for association of the 30S and 50S subunits to form the 70S ribosome, for tRNA binding and peptide bond formation. It has been suggested to have peptidyltransferase activity; this is somewhat controversial. Makes several contacts with the 16S rRNA in the 70S ribosome. This Haloquadratum walsbyi (strain DSM 16790 / HBSQ001) protein is Large ribosomal subunit protein uL2.